Reading from the N-terminus, the 66-residue chain is Small ribosomal subunit protein bS21 (66 aa).

The protein belongs to the bacterial ribosomal protein bS21 family.

This chain is Small ribosomal subunit protein bS21, found in Maridesulfovibrio salexigens (strain ATCC 14822 / DSM 2638 / NCIMB 8403 / VKM B-1763) (Desulfovibrio salexigens).